The following is a 132-amino-acid chain: Small ribosomal subunit protein uS8 (132 aa).

This sequence belongs to the universal ribosomal protein uS8 family. In terms of assembly, part of the 30S ribosomal subunit. Contacts proteins S5 and S12.

One of the primary rRNA binding proteins, it binds directly to 16S rRNA central domain where it helps coordinate assembly of the platform of the 30S subunit. The polypeptide is Small ribosomal subunit protein uS8 (Rhodopseudomonas palustris (strain HaA2)).